Consider the following 401-residue polypeptide: CCA-adding enzyme (401 aa).

Residues G32 and R35 each coordinate ATP. Positions 32 and 35 each coordinate CTP. The Mg(2+) site is built by D45 and D47. Residues R116, D159, R162, R165, and R168 each contribute to the ATP site. CTP-binding residues include R116, D159, R162, R165, and R168.

The protein belongs to the tRNA nucleotidyltransferase/poly(A) polymerase family. Bacterial CCA-adding enzyme type 3 subfamily. Homodimer. The cofactor is Mg(2+).

It catalyses the reaction a tRNA precursor + 2 CTP + ATP = a tRNA with a 3' CCA end + 3 diphosphate. The enzyme catalyses a tRNA with a 3' CCA end + 2 CTP + ATP = a tRNA with a 3' CCACCA end + 3 diphosphate. Functionally, catalyzes the addition and repair of the essential 3'-terminal CCA sequence in tRNAs without using a nucleic acid template. Adds these three nucleotides in the order of C, C, and A to the tRNA nucleotide-73, using CTP and ATP as substrates and producing inorganic pyrophosphate. tRNA 3'-terminal CCA addition is required both for tRNA processing and repair. Also involved in tRNA surveillance by mediating tandem CCA addition to generate a CCACCA at the 3' terminus of unstable tRNAs. While stable tRNAs receive only 3'-terminal CCA, unstable tRNAs are marked with CCACCA and rapidly degraded. The sequence is that of CCA-adding enzyme from Streptococcus mutans serotype c (strain ATCC 700610 / UA159).